The following is a 208-amino-acid chain: Ribosome maturation factor RimP (208 aa).

The protein belongs to the RimP family.

It localises to the cytoplasm. In terms of biological role, required for maturation of 30S ribosomal subunits. The sequence is that of Ribosome maturation factor RimP from Bartonella tribocorum (strain CIP 105476 / IBS 506).